We begin with the raw amino-acid sequence, 408 residues long: Argininosuccinate synthase (408 aa).

ATP is bound by residues 10 to 18 (AYSGGLDTS) and Ala37. 2 residues coordinate L-citrulline: Tyr90 and Ser95. Gly120 lines the ATP pocket. The L-aspartate site is built by Thr122, Asn126, and Asp127. L-citrulline is bound at residue Asn126. Positions 130, 182, 191, 267, and 279 each coordinate L-citrulline.

The protein belongs to the argininosuccinate synthase family. Type 1 subfamily. As to quaternary structure, homotetramer.

It localises to the cytoplasm. The catalysed reaction is L-citrulline + L-aspartate + ATP = 2-(N(omega)-L-arginino)succinate + AMP + diphosphate + H(+). Its pathway is amino-acid biosynthesis; L-arginine biosynthesis; L-arginine from L-ornithine and carbamoyl phosphate: step 2/3. The sequence is that of Argininosuccinate synthase from Paraburkholderia xenovorans (strain LB400).